The chain runs to 293 residues: DNA repair protein RecO (293 aa).

It belongs to the RecO family.

Involved in DNA repair and RecF pathway recombination. In Acaryochloris marina (strain MBIC 11017), this protein is DNA repair protein RecO.